Reading from the N-terminus, the 1345-residue chain is Rho guanine nucleotide exchange factor 10 (1345 aa).

Disordered regions lie at residues 1–84 and 99–120; these read MEQG…PAKL and TPLQEDQPSSPDANTEEEGVGL. A compositionally biased stretch (acidic residues) spans 22-39; the sequence is NNEEEGELFDFDSGDEVP. Positions 40-54 are enriched in basic and acidic residues; sequence EADRQVPSADDRTRG. A compositionally biased stretch (polar residues) spans 102 to 111; that stretch reads QEDQPSSPDA. Ser-157 bears the Phosphoserine mark. Disordered stretches follow at residues 158–195 and 207–273; these read VEEEEAAETVGDGQCNSLSSEDLPHSSEQGSQEGSALA and MENP…IPRS. Positions 171 to 191 are enriched in polar residues; sequence QCNSLSSEDLPHSSEQGSQEG. Over residues 224-239 the composition is skewed to acidic residues; the sequence is DSEPDEMIYDDVENGE. Residues 242 to 255 are compositionally biased toward low complexity; sequence GNSSPEYGWSSSEF. Positions 307 to 335 form a coiled coil; the sequence is GAMEIQQAKQRQERKMQKLMKAAKEGTKD. Phosphoserine is present on Ser-355. A DH domain is found at 397-584; it reads VRRYILGSIV…ETLAEKLNER (188 aa). Disordered stretches follow at residues 1202-1237 and 1253-1306; these read DRARDSPRSGSELQDEDPKDLLCSEEGPSCPGQPDT and KNDL…RASS. Residues 1256–1271 show a composition bias toward low complexity; sequence LSSSSGSLNLSHGSSS. At Ser-1262 the chain carries Phosphoserine. Position 1314 is an N5-methylglutamine (Gln-1314).

In terms of processing, methylated at Gln-1314 by N6AMT1. Ubiquitously expressed.

May play a role in developmental myelination of peripheral nerves. This Mus musculus (Mouse) protein is Rho guanine nucleotide exchange factor 10 (Arhgef10).